Consider the following 324-residue polypeptide: Homeobox protein engrailed-2 (324 aa).

Disordered regions lie at residues 1–59 (MEEK…HQHP), 89–174 (GGAR…VLKA), and 215–240 (DRPSSGPRSRKPKKKNPNKEDKRPRT). Residues 89–110 (GGARGGEGGAGTTEGGGGGAGG) show a composition bias toward gly residues. The homeobox DNA-binding region spans 235–294 (DKRPRTAFTAEQLQRLKAEFQTNRYLTEQRRQSLAQELSLNESQIKIWFQNKRAKIKKAT).

The protein belongs to the engrailed homeobox family. Cerebellar granule cells.

The protein localises to the nucleus. This chain is Homeobox protein engrailed-2 (En2), found in Mus musculus (Mouse).